Consider the following 282-residue polypeptide: DNA-binding transcriptional repressor YiaJ (282 aa).

Basic and acidic residues predominate over residues 1–20 (MGKEVMGKKENEMAQEKERP). The disordered stretch occupies residues 1–21 (MGKEVMGKKENEMAQEKERPA). The HTH iclR-type domain maps to 23–85 (SQSLFRGLML…PAAGSYRLTT (63 aa)). Residues 45–64 (LAHLSELAGLNKSTVHRLLQ) constitute a DNA-binding region (H-T-H motif). Residues 100-272 (IIHIAAPHLE…AQAISNELGF (173 aa)) enclose the IclR-ED domain.

Negatively controls the transcription of the yiaKLMNOPQRS operon, which may be involved in the utilization of 2,3-diketo-L-gulonate. This Escherichia coli (strain K12) protein is DNA-binding transcriptional repressor YiaJ (yiaJ).